Here is a 306-residue protein sequence, read N- to C-terminus: Ankyrin repeat domain-containing protein 23 (306 aa).

Residues 41-90 (QEAVAREKLKLEEEKRKKLERFNSSRLTLDNLTDLENLVQRRRKKRQRHK) are a coiled coil. The tract at residues 78–107 (LVQRRRKKRQRHKVPPREPESGAEPQPQVP) is disordered. The span at 80–91 (QRRRKKRQRHKV) shows a compositional bias: basic residues. ANK repeat units lie at residues 144–173 (LHRT…AIEV), 177–206 (LDRT…QVNA), 210–239 (IWST…HINA), and 243–272 (EGDT…KLGV). Residues 179 to 196 (RTPVFWACRGGHLDILKR) are interaction with TTN.

As to quaternary structure, interacts with titin/TTN and MYPN.

Its subcellular location is the nucleus. May be involved in the energy metabolism. Could be a molecular link between myofibrillar stretch-induced signaling pathways and muscle gene expression. The polypeptide is Ankyrin repeat domain-containing protein 23 (Ankrd23) (Mus musculus (Mouse)).